The sequence spans 570 residues: Probable D-xylulose kinase A (570 aa).

Substrate-binding residues include histidine 95, arginine 166, aspartate 282, and asparagine 283. ATP-binding positions include tryptophan 364, 469-470, and asparagine 473; that span reads GG.

This sequence belongs to the FGGY kinase family.

The protein localises to the cytoplasm. It carries out the reaction D-xylulose + ATP = D-xylulose 5-phosphate + ADP + H(+). In terms of biological role, highly specific D-xylulose kinase which participates in the catabolism of xylose. Xylose is a major component of hemicelluloses such as xylan. Most fungi utilize D-xylose via three enzymatic reactions, xylose reductase (XR), xylitol dehydrogenase (XDH), and xylulokinase, to form xylulose 5-phosphate, which enters pentose phosphate pathway. The sequence is that of Probable D-xylulose kinase A (xkiA) from Aspergillus niger (strain ATCC MYA-4892 / CBS 513.88 / FGSC A1513).